The sequence spans 459 residues: MFIDDTIAAIATAPGEGGIGILRISGEKALKVAEEIFKSMSGKSIEEYNKRTLIYGNIVDNENIIDEVLLAYMKGPNSYTGEDVIEINCHGGFISVKKILELILSKDVRLAEAGEFTKRAFLNGRIDLSQAEAVIDVIKAKTDIAHEVAQNQLEGSLSKKIRELRDKVTEILAHVEVAIDYPEEDIEHITYQTLKEKTDELKKDIKKLYDTAESGKILREGLKTVIVGKPNVGKSSLLNSILGENRAIVTDIPGTTRDVIEEFVNIKGIPLKIVDTAGIRDTDDIVEKIGVEKSKESFTSADLIVMVLDASRKLSEEDIEILEKLKDKQTIVLLNKNDLKQEIEEEKILKYVENNSIIKISALQQEGIEELQDKIESMVYKGSIKNNSSLVVTNSRHKDALSKAYKSATDALIALEQSMPFDFVEVDLKNIWDYLGYINGDTVTEDLLDNIFHNFCIGK.

(6S)-5-formyl-5,6,7,8-tetrahydrofolate contacts are provided by Arg-23, Glu-86, and Arg-125. A TrmE-type G domain is found at 221–380 (GLKTVIVGKP…LQDKIESMVY (160 aa)). A K(+)-binding site is contributed by Asn-231. GTP-binding positions include 231-236 (NVGKSS), 250-256 (TDIPGTT), and 275-278 (DTAG). Position 235 (Ser-235) interacts with Mg(2+). The K(+) site is built by Thr-250, Ile-252, and Thr-255. Mg(2+) is bound at residue Thr-256. Lys-459 contacts (6S)-5-formyl-5,6,7,8-tetrahydrofolate.

It belongs to the TRAFAC class TrmE-Era-EngA-EngB-Septin-like GTPase superfamily. TrmE GTPase family. In terms of assembly, homodimer. Heterotetramer of two MnmE and two MnmG subunits. It depends on K(+) as a cofactor.

The protein localises to the cytoplasm. In terms of biological role, exhibits a very high intrinsic GTPase hydrolysis rate. Involved in the addition of a carboxymethylaminomethyl (cmnm) group at the wobble position (U34) of certain tRNAs, forming tRNA-cmnm(5)s(2)U34. In Clostridioides difficile (strain 630) (Peptoclostridium difficile), this protein is tRNA modification GTPase MnmE.